We begin with the raw amino-acid sequence, 634 residues long: Probable potassium transport system protein Kup (634 aa).

The next 12 helical transmembrane spans lie at 19–39, 62–82, 113–133, 150–170, 177–197, 225–245, 259–279, 291–311, 349–369, 379–399, 406–426, and 431–451; these read AIGLMVGAVGVCYGDIGTSPL, VLSLIFWSLVWVVSIKYVIFV, FVVVAGLIGAALFYGDSMITP, GLEHWTVPLALIVLIGLFLIQ, IGILFGPVMVLWFGALAALGV, IGVAILGATVLALTGAEALYA, WFLLVLPALVLNYFGQGATIL, LLAPGWALLPMVALSTLATVI, IYIGGVNWALMVGVVLLVLGF, YGVAVTGTMLITTLLMGVVIW, LWLGVPFFCVMLAVDSLFFAA, and VIQGGAFPVIAGIVIFILMST.

The protein belongs to the HAK/KUP transporter (TC 2.A.72) family.

The protein resides in the cell inner membrane. It carries out the reaction K(+)(in) + H(+)(in) = K(+)(out) + H(+)(out). In terms of biological role, transport of potassium into the cell. Likely operates as a K(+):H(+) symporter. The protein is Probable potassium transport system protein Kup of Pseudomonas aeruginosa (strain LESB58).